A 505-amino-acid polypeptide reads, in one-letter code: Sodium-coupled neutral amino acid transporter 3 (505 aa).

Positions 27–48 (VPTTDTQRTEDTQHCGEGKGFL) are disordered. Basic and acidic residues predominate over residues 33 to 43 (QRTEDTQHCGE). An N-linked (GlcNAc...) asparagine glycan is attached at Asn-73. The next 5 membrane-spanning stretches (helical) occupy residues 82–102 (GILGLAYAMANTGIILFLFLL), 105–125 (VALLSSYSIHLLLKSSGIVGI), 143–163 (AAALAITLQNIGAMSSYLYII), 186–206 (MDGNYLVILVSVTIILPLALM), and 212–232 (LGYSSGFSLSCMVFFLIAVIY). A disulfide bridge connects residues Cys-239 and Cys-276. Residues Asn-247 and Asn-251 are each glycosylated (N-linked (GlcNAc...) asparagine). The chain crosses the membrane as a helical span at residues 288–308 (AYTIPIMAFAFVCHPEVLPIY). A glycan (N-linked (GlcNAc...) asparagine) is linked at Asn-324. 5 consecutive transmembrane segments (helical) span residues 325-345 (LSIAVMYVMYFLAALFGYLTF), 367-387 (ILCVRVAVLIAVTLTVPIVLF), 409-429 (VLIATGLLTCINLLVIFAPNI), 432-452 (IFGIIGATSAPCLIFIFPAIF), and 472-492 (ALCFAAVGFLLMTMSLSFIII).

This sequence belongs to the amino acid/polyamine transporter 2 family. In terms of tissue distribution, expressed predominantly in liver, moderately expressed in kidney and brain, and barely detectable in heart and muscle. Within liver, expressed in hepatocytes. Not detected in testis. Expressed in cells of the ganglion cell layer, in soma of some cells of the inner nuclear layer (at protein level). Expressed in the inner segments of photoreceptor cells.

It is found in the cell membrane. Its subcellular location is the basolateral cell membrane. The enzyme catalyses L-histidine(out) + Na(+)(out) + H(+)(in) = L-histidine(in) + Na(+)(in) + H(+)(out). It carries out the reaction L-glutamine(out) + Na(+)(out) + H(+)(in) = L-glutamine(in) + Na(+)(in) + H(+)(out). It catalyses the reaction L-asparagine(out) + Na(+)(out) + H(+)(in) = L-asparagine(in) + Na(+)(in) + H(+)(out). Its function is as follows. Symporter that cotransports specific neutral amino acids and sodium ions, coupled to an H(+) antiporter activity. Mainly participates in the glutamate-GABA-glutamine cycle in brain where it transports L-glutamine from astrocytes in the intercellular space for the replenishment of both neurotransmitters glutamate and gamma-aminobutyric acid (GABA) in neurons and also functions as the major influx transporter in ganglion cells mediating the uptake of glutamine. The transport activity is specific for L-glutamine, L-histidine and L-asparagine. The transport is electroneutral coupled to the cotransport of 1 Na(+) and the antiport of 1 H(+). The transport is pH dependent, saturable, Li(+) tolerant and functions in both direction depending on the concentration gradients of its substrates and cotransported ions. Also mediates an amino acid-gated H(+) conductance that is not stoichiometrically coupled to the amino acid transport but which influences the ionic gradients that drive the amino acid transport. In addition, may play a role in nitrogen metabolism, amino acid homeostasis, glucose metabolism and renal ammoniagenesis. In Mus musculus (Mouse), this protein is Sodium-coupled neutral amino acid transporter 3.